Reading from the N-terminus, the 209-residue chain is Probable GTP-binding protein EngB (209 aa).

Residues 12 to 203 (VSFEIIFVGR…RDRLHEMKRD (192 aa)) form the EngB-type G domain. GTP contacts are provided by residues 20 to 27 (GRSNVGKS), 45 to 49 (GVTLR), 62 to 65 (DMPG), 142 to 145 (NKMD), and 179 to 181 (ISA). S27 and T47 together coordinate Mg(2+).

This sequence belongs to the TRAFAC class TrmE-Era-EngA-EngB-Septin-like GTPase superfamily. EngB GTPase family. Mg(2+) is required as a cofactor.

Functionally, necessary for normal cell division and for the maintenance of normal septation. In Methanosarcina barkeri (strain Fusaro / DSM 804), this protein is Probable GTP-binding protein EngB.